Here is a 202-residue protein sequence, read N- to C-terminus: Probable cytochrome c oxidase subunit 3 (202 aa).

Transmembrane regions (helical) follow at residues 30-50, 69-89, 101-121, 141-161, and 178-198; these read VVWLSSELMFFAGLFAMYFTA, AVPVTLVLIASSFTCQMGVFS, WYVITLLMGLFFVLGQGYEYY, LATGFHGLHVTGGLIAFIFLL, and IVVSYYWHFVDIVWIALFTVI.

This sequence belongs to the cytochrome c oxidase subunit 3 family.

The protein resides in the cell membrane. It catalyses the reaction 4 Fe(II)-[cytochrome c] + O2 + 8 H(+)(in) = 4 Fe(III)-[cytochrome c] + 2 H2O + 4 H(+)(out). This Mycobacterium leprae (strain TN) protein is Probable cytochrome c oxidase subunit 3 (ctaE).